Reading from the N-terminus, the 363-residue chain is Isopentenyl-diphosphate delta-isomerase (363 aa).

A substrate-binding site is contributed by R7–K8. Residues A71 to T73, S101, and N130 contribute to the FMN site. Q160 contributes to the substrate binding site. Mg(2+) is bound at residue E161. FMN is bound by residues K192, S217, T222, G270 to R272, and A291 to G292.

The protein belongs to the IPP isomerase type 2 family. Homooctamer. Dimer of tetramers. The cofactor is FMN. NADPH is required as a cofactor. It depends on Mg(2+) as a cofactor.

The protein resides in the cytoplasm. It catalyses the reaction isopentenyl diphosphate = dimethylallyl diphosphate. Its function is as follows. Involved in the biosynthesis of isoprenoids. Catalyzes the 1,3-allylic rearrangement of the homoallylic substrate isopentenyl (IPP) to its allylic isomer, dimethylallyl diphosphate (DMAPP). This Symbiobacterium thermophilum (strain DSM 24528 / JCM 14929 / IAM 14863 / T) protein is Isopentenyl-diphosphate delta-isomerase.